We begin with the raw amino-acid sequence, 183 residues long: Ribosome rescue factor SmrB (183 aa).

The region spanning 98 to 173 (LDLHGLTQLQ…GDAALLVLIE (76 aa)) is the Smr domain.

Belongs to the SmrB family. Associates with collided ribosomes, but not with correctly translating polysomes.

Its function is as follows. Acts as a ribosome collision sensor. Detects stalled/collided disomes (pairs of ribosomes where the leading ribosome is stalled and a second ribosome has collided with it) and endonucleolytically cleaves mRNA at the 5' boundary of the stalled ribosome. Stalled/collided disomes form a new interface (primarily via the 30S subunits) that binds SmrB. Cleaved mRNA becomes available for tmRNA ligation, leading to ribosomal subunit dissociation and rescue of stalled ribosomes. The protein is Ribosome rescue factor SmrB of Salmonella paratyphi A (strain ATCC 9150 / SARB42).